We begin with the raw amino-acid sequence, 358 residues long: MKAATASIDLNALEHNLNQIKSKAPHCKVMSVVKANGYGHGLLHIAKHSKSSDAFGVARIEEALQLRAGGIVKPILLLEGFYSSGDLPILVTNNIQTVVHCEEQLSALENAELETPVVVWLKVDSGMHRLGARPEQYQNFVERLHQCANVAKPLRYMSHFGCADELDRATTVEQTELFLSLTDGCEGERSLAASAGLLAWPDSHLDWVRPGIISYGVSPFADKSAQDLGFYPVMTLTSHLIAVRDVKAGESVGYGGNWTSERDTKVGVIAIGYGDGYPRTAPNGTPVFVNGRKVPIAGRVSMDMLTVDLGPDAADKVGDEATLWGKDLPSEEVAEHIGTIAYELVTKLTSRVAMEYVK.

Catalysis depends on K34, which acts as the Proton acceptor; specific for D-alanine. K34 bears the N6-(pyridoxal phosphate)lysine mark. Residue R129 coordinates substrate. Y254 (proton acceptor; specific for L-alanine) is an active-site residue. Residue M302 participates in substrate binding.

Belongs to the alanine racemase family. Requires pyridoxal 5'-phosphate as cofactor.

The catalysed reaction is L-alanine = D-alanine. Its pathway is amino-acid biosynthesis; D-alanine biosynthesis; D-alanine from L-alanine: step 1/1. Functionally, catalyzes the interconversion of L-alanine and D-alanine. May also act on other amino acids. The chain is Alanine racemase (alr) from Vibrio atlanticus (strain LGP32) (Vibrio splendidus (strain Mel32)).